The following is a 252-amino-acid chain: Protein AGAMOUS-LIKE 6 (252 aa).

In terms of domain architecture, MADS-box spans Met-1–Gly-61. 2 short sequence motifs (nuclear localization signal) span residues Leu-8–Ile-15 and Gln-138–Met-145. A K-box domain is found at Thr-85–Ser-175.

In terms of tissue distribution, restricted to flowers.

It is found in the nucleus. Its function is as follows. Probable transcription factor involved in fruit development. Key regulator of the transition between the state of 'ovary arrest' imposed towards anthesis and the fertilization-triggered fruit set. This is Protein AGAMOUS-LIKE 6 from Solanum lycopersicum (Tomato).